The chain runs to 310 residues: tRNA uridine(34) hydroxylase (310 aa).

The Rhodanese domain occupies 123-217 (ADPDVVVIDV…YLEKVPEDES (95 aa)). C177 acts as the Cysteine persulfide intermediate in catalysis.

The protein belongs to the TrhO family.

It catalyses the reaction uridine(34) in tRNA + AH2 + O2 = 5-hydroxyuridine(34) in tRNA + A + H2O. In terms of biological role, catalyzes oxygen-dependent 5-hydroxyuridine (ho5U) modification at position 34 in tRNAs. This chain is tRNA uridine(34) hydroxylase, found in Acaryochloris marina (strain MBIC 11017).